Here is a 330-residue protein sequence, read N- to C-terminus: Chromatin modification-related protein EAF3 (330 aa).

The Tudor-knot domain maps to aspartate 5 to leucine 62. The segment at threonine 96–alanine 129 is disordered. A compositionally biased stretch (basic and acidic residues) spans arginine 104 to serine 115. Residues lysine 135 to serine 329 enclose the MRG domain.

It belongs to the MRG family. As to quaternary structure, component of the NuA4 histone acetyltransferase complex.

The protein localises to the nucleus. Functionally, involved in deacetylation of histones, chromatin assembly and chromosome segregation. May act as a transcriptional oscillator, directing histone deacetylases to specific chromosomal domains. Component of the NuA4 histone acetyltransferase complex which is involved in transcriptional activation of selected genes principally by acetylation of nucleosomal histone H4 and H2A. The NuA4 complex is also involved in DNA repair. This chain is Chromatin modification-related protein EAF3 (EAF3), found in Mycosarcoma maydis (Corn smut fungus).